Reading from the N-terminus, the 205-residue chain is Protein phosphatase inhibitor 2 family member B (205 aa).

The interval M1–S44 is disordered. A2 bears the N-acetylalanine mark. Required for binding PPP1CC regions lie at residues K12 to N17 and K43 to T55. Positions N17–V26 are enriched in polar residues. A compositionally biased stretch (basic and acidic residues) spans Q31–S44. S44 carries the phosphoserine modification. Residues T89 and T92 each carry the phosphothreonine modification. Residues E111 to M142 are disordered. Phosphoserine occurs at positions 121, 122, 127, and 130. Residues S121–S130 are compositionally biased toward acidic residues. Over residues P131–M142 the composition is skewed to basic and acidic residues. Residues H147–E150 form a required for binding PPP1CC catalytic center, displacing metal ions and inhibition of PPP1CC catalytic activity region. A disordered region spans residues K163 to S205. The span at D167–D179 shows a compositional bias: acidic residues. Over residues S182–S205 the composition is skewed to polar residues.

This sequence belongs to the protein phosphatase inhibitor 2 family. Interacts with PPP1CC. As to expression, only detected in spermatozoa, both heads and tails.

In terms of biological role, inhibitor of protein-phosphatase 1. This Homo sapiens (Human) protein is Protein phosphatase inhibitor 2 family member B.